A 294-amino-acid chain; its full sequence is uncharacterized protein (294 aa).

The segment at 1–215 (MTTAITPDKK…DQDDDDQKDL (215 aa)) is disordered. 2 stretches are compositionally biased toward basic residues: residues 27–43 (TKPRRSSKTSKKRKSKK) and 50–78 (AKKRKTKRSKKSAKRTKRSAPKKAPKKAP). Residues 79-88 (MKAPSKPAAK) are compositionally biased toward low complexity. Residues 92 to 102 (QQAQASLQKPI) are compositionally biased toward polar residues. The segment covering 118–136 (PRPPTPIPPTGVKPEPAPR) has biased composition (pro residues). Over residues 145 to 160 (SVSSTTPRTSATTGTT) the composition is skewed to low complexity.

This is an uncharacterized protein from Caenorhabditis elegans.